The chain runs to 400 residues: Octopine dehydrogenase (400 aa).

Residues 10-13 and 35-38 each bind NADH; these read GGNG and FADE. Residues Q118 and T143 each contribute to the pyruvate site. Substrate is bound at residue Q118. C148 contributes to the NAD(+) binding site. M206 provides a ligand contact to L-arginine. Position 212 (H212) interacts with pyruvate. H212 is an active-site residue. R324 contacts NAD(+).

Belongs to the lysopine/nopaline/octopine/opine/vitopine dehydrogenases family.

It carries out the reaction D-octopine + NAD(+) + H2O = L-arginine + pyruvate + NADH + H(+). Catalyzes the reverse reaction of octopine dehydrogenation. Acts on L-arginine in preference to other substrates. This Mizuhopecten yessoensis (Japanese scallop) protein is Octopine dehydrogenase.